A 262-amino-acid chain; its full sequence is Urease accessory protein UreD (262 aa).

The protein belongs to the UreD family. In terms of assembly, ureD, UreF and UreG form a complex that acts as a GTP-hydrolysis-dependent molecular chaperone, activating the urease apoprotein by helping to assemble the nickel containing metallocenter of UreC. The UreE protein probably delivers the nickel.

The protein localises to the cytoplasm. Required for maturation of urease via the functional incorporation of the urease nickel metallocenter. The polypeptide is Urease accessory protein UreD (Acetivibrio thermocellus (strain ATCC 27405 / DSM 1237 / JCM 9322 / NBRC 103400 / NCIMB 10682 / NRRL B-4536 / VPI 7372) (Clostridium thermocellum)).